We begin with the raw amino-acid sequence, 209 residues long: Aspartate kinase-like protein lolA1 (209 aa).

Basic and acidic residues predominate over residues 1-11 (MLDESPMRKGD). Residues 1 to 27 (MLDESPMRKGDSVSNDQSNPESNASVS) are disordered. Over residues 12-27 (SVSNDQSNPESNASVS) the composition is skewed to polar residues.

This sequence belongs to the aspartokinase family.

The protein operates within alkaloid biosynthesis. Functionally, aspartokinase-like protein; part of the gene cluster that mediates the biosynthesis of loline alkaloids, potent insecticidal agents composed of a pyrrolizidine ring system and an uncommon ether bridge linking carbons 2 and 7. Lolines are structurally differentiated by the various modifications of the L-amino group and include norloline, loline, N-methylloline, N-acetylloline, N-acetylnorloline, and N-formylloline. The first committed step is the condensation of O-acetyl-L-homoserine (derived from L-aspartic acid) and L-proline, probably catalyzed by the gamma-type pyridoxal 5'-phosphate(PLP)-dependent enzyme lolC, to give the diamino diacid, NACPP. Ensuing cyclization, decarboxylation, and acetylation steps yield 1-exo-acetamidopyrrolizidine (AcAP). LolO is required for installation of the ether bridge upon the pathway intermediate, 1-exo-acetamidopyrrolizidine (AcAP). In sequential 2-oxoglutarate- and O(2)-consuming steps, lolO removes hydrogens from C2 and C7 of AcAP to form both carbon-oxygen bonds in N-acetylnorloline (NANL), the precursor to all other lolines. The enzymes lolD, lolE, lolF and lolT have also been proposed to be involved in the ether-bridge installation. Further processing of the exocyclic moiety of NANL by fungal N-acetamidase (LolN), methyltransferase (LolM), and cytochrome P450 (LolP) enzymes, with occasional involvement of a plant acetyltransferase, generates the other known lolines. LolN transforms NANL to norlonine which is monomethylated and dimethylated to respectively lonine and N-methyllonine (NML) by lolM. LolP catalyzes hydroxylation of the methyl group in N-methylloline (NML) and further oxygenation to N-formylloline (NFL). A plant acetyltransferase is responsible for the acetylation of loline to form N-acetylloline (NAL). LolA might interact with aspartate kinase to prevent feedback inhibition of its activity by these end products and thereby promote production of L-homoserine from L-aspartate. The chain is Aspartate kinase-like protein lolA1 from Epichloe uncinata (Endophyte fungus).